A 256-amino-acid polypeptide reads, in one-letter code: Leucyl/phenylalanyl-tRNA--protein transferase (256 aa).

The disordered stretch occupies residues 1-21; the sequence is MIPWLPDDSDSAPFPPTRLAL.

The protein belongs to the L/F-transferase family.

The protein resides in the cytoplasm. It catalyses the reaction N-terminal L-lysyl-[protein] + L-leucyl-tRNA(Leu) = N-terminal L-leucyl-L-lysyl-[protein] + tRNA(Leu) + H(+). It carries out the reaction N-terminal L-arginyl-[protein] + L-leucyl-tRNA(Leu) = N-terminal L-leucyl-L-arginyl-[protein] + tRNA(Leu) + H(+). The enzyme catalyses L-phenylalanyl-tRNA(Phe) + an N-terminal L-alpha-aminoacyl-[protein] = an N-terminal L-phenylalanyl-L-alpha-aminoacyl-[protein] + tRNA(Phe). In terms of biological role, functions in the N-end rule pathway of protein degradation where it conjugates Leu, Phe and, less efficiently, Met from aminoacyl-tRNAs to the N-termini of proteins containing an N-terminal arginine or lysine. In Leptothrix cholodnii (strain ATCC 51168 / LMG 8142 / SP-6) (Leptothrix discophora (strain SP-6)), this protein is Leucyl/phenylalanyl-tRNA--protein transferase.